The chain runs to 359 residues: Peptide chain release factor 1 (359 aa).

Glutamine 236 carries the post-translational modification N5-methylglutamine. The tract at residues 288–307 (QDEQDAERKSTIGTGDRSER) is disordered. A compositionally biased stretch (basic and acidic residues) spans 293–307 (AERKSTIGTGDRSER).

This sequence belongs to the prokaryotic/mitochondrial release factor family. Methylated by PrmC. Methylation increases the termination efficiency of RF1.

The protein resides in the cytoplasm. Peptide chain release factor 1 directs the termination of translation in response to the peptide chain termination codons UAG and UAA. This Streptococcus gordonii (strain Challis / ATCC 35105 / BCRC 15272 / CH1 / DL1 / V288) protein is Peptide chain release factor 1 (prfA).